The chain runs to 311 residues: Ketoisovalerate oxidoreductase subunit VorB (311 aa).

As to quaternary structure, heterotetramer of one alpha, one beta, one delta and one gamma chain.

The enzyme catalyses 3-methyl-2-oxobutanoate + 2 oxidized [2Fe-2S]-[ferredoxin] + CoA = 2-methylpropanoyl-CoA + 2 reduced [2Fe-2S]-[ferredoxin] + CO2 + H(+). The sequence is that of Ketoisovalerate oxidoreductase subunit VorB (vorB) from Pyrococcus horikoshii (strain ATCC 700860 / DSM 12428 / JCM 9974 / NBRC 100139 / OT-3).